We begin with the raw amino-acid sequence, 593 residues long: Pentatricopeptide repeat-containing protein At5g24830 (593 aa).

PPR repeat units follow at residues 120 to 154, 155 to 189, 190 to 224, 225 to 256, 264 to 298, 299 to 333, 334 to 368, 369 to 403, 404 to 438, 439 to 473, 474 to 508, and 509 to 543; these read CLSI…GVIP, GLIT…GPSP, NCVS…GIRP, NRVT…ILDS, DIVI…NVPA, DSVV…GVNP, DVFT…GVAP, DQIS…SLLP, EVLL…GVKP, NVYT…KIHP, DTTT…GCQP, and DIIT…GITI.

Belongs to the PPR family. P subfamily.

The protein is Pentatricopeptide repeat-containing protein At5g24830 of Arabidopsis thaliana (Mouse-ear cress).